A 104-amino-acid chain; its full sequence is L-rhamnose mutarotase (104 aa).

Position 18 (Tyr18) interacts with substrate. His22 serves as the catalytic Proton donor. Residues Tyr41 and 76–77 contribute to the substrate site; that span reads WW.

This sequence belongs to the rhamnose mutarotase family. In terms of assembly, homodimer.

The protein resides in the cytoplasm. It carries out the reaction alpha-L-rhamnose = beta-L-rhamnose. Its pathway is carbohydrate metabolism; L-rhamnose metabolism. Its function is as follows. Involved in the anomeric conversion of L-rhamnose. The polypeptide is L-rhamnose mutarotase (Escherichia coli O7:K1 (strain IAI39 / ExPEC)).